A 484-amino-acid polypeptide reads, in one-letter code: Neuronal acetylcholine receptor subunit alpha-9 (484 aa).

Positions 1 to 27 (MKRNNLSSFYVSLWLLFTATMLQAVES) are cleaved as a signal peptide. The Extracellular segment spans residues 28–240 (AKGKYAQMLF…FTLILKRKSS (213 aa)). N59 carries an N-linked (GlcNAc...) asparagine glycan. A disulfide bridge connects residues C157 and C171. The N-linked (GlcNAc...) asparagine glycan is linked to N172. Na(+)-binding residues include S193 and D195. C221 and C222 are disulfide-bonded. 3 consecutive transmembrane segments (helical) span residues 241–261 (FYIF…PLGF), 271–291 (VSLG…VAEI), and 305–325 (YIAT…IMNV). At 326-462 (HHCGSEAKPV…WKKVAKVMDR (137 aa)) the chain is on the cytoplasmic side. Positions 364–395 (RREKEQEHRLEGGDMCRGGDGKSHLSSRNDDS) are disordered. A helical membrane pass occupies residues 463 to 483 (FFMWIFFIMVFFMSVLIIGKA).

This sequence belongs to the ligand-gated ion channel (TC 1.A.9) family. Acetylcholine receptor (TC 1.A.9.1) subfamily. Alpha-9/CHRNA9 sub-subfamily. In terms of assembly, forms homo- or heteropentameric channels in conjunction with CHRNA10. The native outer hair cell receptor is composed of CHRNA9:CHRNA10 heterooligomers. Found in the stoichiometric form (CHRNA9)2:(CHRNA10)3. In terms of tissue distribution, expressed in hair cells of the cochlea (at protein level). Expressed in hair cells of the cochlea.

It localises to the synaptic cell membrane. The protein resides in the cell membrane. The catalysed reaction is Ca(2+)(in) = Ca(2+)(out). The enzyme catalyses K(+)(in) = K(+)(out). It catalyses the reaction Na(+)(in) = Na(+)(out). It carries out the reaction Mg(2+)(in) = Mg(2+)(out). Activated by a myriad of ligands such as acetylcholine. AChR activity is inhibited by the antagonist alpha-conotoxins RgIA and GeXXA, small disulfide-constrained peptides from cone snails. Its function is as follows. Component of neuronal acetylcholine receptors (nAChRs) that function as pentameric, ligand-gated cation channels with high calcium permeability among other activities. nAChRs are excitatory neurotrasnmitter receptors formed by a collection of nAChR subunits known to mediate synaptic transmission in the nervous system and the neuromuscular junction. Each nAchR subunit confers differential attributes to channel properties, including activation, deactivation and desensitization kinetics, pH sensitivity, cation permeability, and binding to allosteric modulators. Forms either homopentamers or heteropentamers with CHRNA10. Expressed in the inner ear, in sympathetic neurons and in other non-neuronal cells, such as skin keratinocytes and lymphocytes. The channel is permeable to a range of divalent cations including calcium, the influx of which may activate a potassium current which hyperpolarizes the cell membrane. This Gallus gallus (Chicken) protein is Neuronal acetylcholine receptor subunit alpha-9 (CHRNA9).